A 224-amino-acid polypeptide reads, in one-letter code: MAAAVPQRAWTVEQLRSEQLPKKDIIKFLQDHGSDSFLAEHKLLGNIKNVAKTANKDHLVTAYNHLFESKRFKGTESISKVSEQVKNVKLNEDKPKETKSEETLDEGPPKYTKSVLKKGDKTNFPKKGDVVHCWYTGTLQDGTVFDTNIQTSSKKKKNAKPLSFKVGIGKVIRGWDEALLTMSKGEKARLEIEPEWAYGKKGQPDAKIPPNAKLIFEVELVDID.

N-acetylalanine is present on A2. Phosphoserine is present on S36. A compositionally biased stretch (basic and acidic residues) spans 89 to 102 (KLNEDKPKETKSEE). Residues 89 to 113 (KLNEDKPKETKSEETLDEGPPKYTK) form a disordered region. Residue K99 is modified to N6-acetyllysine. In terms of domain architecture, PPIase FKBP-type spans 128-224 (GDVVHCWYTG…IFEVELVDID (97 aa)). At S152 the chain carries Phosphoserine. K170 is modified (N6-acetyllysine).

It belongs to the FKBP-type PPIase family.

It localises to the nucleus. The enzyme catalyses [protein]-peptidylproline (omega=180) = [protein]-peptidylproline (omega=0). With respect to regulation, inhibited preferentially by rapamycin over FK506. FK506- and rapamycin-binding proteins (FKBPs) constitute a family of receptors for the two immunosuppressants which inhibit T-cell proliferation by arresting two dinstinct cytoplasmic signal transmission pathways. PPIases accelerate the folding of proteins. The chain is Peptidyl-prolyl cis-trans isomerase FKBP3 (FKBP3) from Bos taurus (Bovine).